An 803-amino-acid polypeptide reads, in one-letter code: Volume-regulated anion channel subunit LRRC8B (803 aa).

Over 1–25 (MITLTELKCLADAQSSYHILKPWWD) the chain is Cytoplasmic. Residues 26–46 (VFWYYITLIMLLVAVLAGALQ) traverse the membrane as a helical segment. At 47-119 (LTQSRVLCCL…YEKQLHWFAK (73 aa)) the chain is on the extracellular side. Cystine bridges form between C55-C304 and C109-C289. A glycan (N-linked (GlcNAc...) asparagine) is linked at N78. The chain crosses the membrane as a helical span at residues 120 to 140 (FFPYLVLLHTLIFAACSNFWL). At 141-261 (HYPSTSSRLE…DIIYRVYLKQ (121 aa)) the chain is on the cytoplasmic side. A phosphoserine mark is found at S186 and S196. The helical transmembrane segment at 262–282 (IIVKVILFVLIITYVPYFLTH) threads the bilayer. The Extracellular portion of the chain corresponds to 283 to 307 (ITLEIDCSVDVQAFTGYKRYQCVYS). Residues 308–328 (LAEIFKVLASFYVILVILYGL) traverse the membrane as a helical segment. Residues 329–803 (TSSYSLWWML…ERLQTCLDKC (475 aa)) lie on the Cytoplasmic side of the membrane. 13 LRR repeats span residues 464–486 (NLKE…AFLE), 488–509 (NLKI…VFHL), 511–532 (NLKE…MQLE), 539–559 (NLRT…VTDL), 562–582 (SLQK…NNLK), 586–607 (NLKS…IFSL), 609–630 (NLHE…ISFQ), 634–655 (NLSC…IGAL), 657–678 (NLEQ…LFLC), 680–701 (KLHY…IQYL), 703–724 (NLQY…LFQC), 726–747 (KLQC…VGEL), and 749–771 (NLTH…EGCQ).

This sequence belongs to the LRRC8 family. Heterohexamer; oligomerizes with other LRRC8 proteins (LRRC8A, LRRC8C, LRRC8D and/or LRRC8E) to form a heterohexamer. In vivo, the subunit composition may depend primarily on expression levels, and heterooligomeric channels containing various proportions of the different LRRC8 proteins may coexist.

The protein localises to the cell membrane. It is found in the endoplasmic reticulum membrane. It catalyses the reaction chloride(in) = chloride(out). It carries out the reaction iodide(out) = iodide(in). The catalysed reaction is taurine(out) = taurine(in). In terms of biological role, non-essential component of the volume-regulated anion channel (VRAC, also named VSOAC channel), an anion channel required to maintain a constant cell volume in response to extracellular or intracellular osmotic changes. The VRAC channel conducts iodide better than chloride and can also conduct organic osmolytes like taurine. Channel activity requires LRRC8A plus at least one other family member (LRRC8B, LRRC8C, LRRC8D or LRRC8E); channel characteristics depend on the precise subunit composition. This is Volume-regulated anion channel subunit LRRC8B from Homo sapiens (Human).